A 437-amino-acid polypeptide reads, in one-letter code: Nuclear envelope integral membrane protein 1 (437 aa).

An N-terminal signal peptide occupies residues 1-44 (MAGGIKVSVWSAVGPGPRCWGAGGGGGATWLLLVVAGCVVCGSA). The N-linked (GlcNAc...) asparagine glycan is linked to asparagine 123. 5 helical membrane passes run 159–179 (PKLFLVFLLGLTLFFCGDLLS), 183–203 (IFYYSTGMSVGIVASLLIVIF), 214–234 (PIYVILVGGWSFSLYLIQLVF), 244–264 (YWHYLLSYILTVGFMSFAVCY), and 288–308 (GLMYSSIQIPHVAFALIVIAL). Residues 184–295 (FYYSTGMSVG…GLGLMYSSIQ (112 aa)) form an a; required for its colocalization with lamins at the nuclear envelope region. The segment at 334-403 (PVPPRLLTEE…LTPNEVSVHE (70 aa)) is b; required for interaction with RAN-GTP. Positions 334–437 (PVPPRLLTEE…PTFTQNNFLT (104 aa)) are required for nuclear localization. A phosphoserine mark is found at serine 366, serine 419, and serine 420. Over residues 415–425 (DEELSSEEEGS) the composition is skewed to acidic residues. The disordered stretch occupies residues 415-437 (DEELSSEEEGSEYPTFTQNNFLT). Polar residues predominate over residues 428–437 (PTFTQNNFLT).

It belongs to the NEMP family. Homooligomer. Interacts with RAN-GTP. Interacts with EMD. Phosphorylated. Phosphorylation may regulate its interaction with RAN-GTP. As to expression, in the ovary, expression is strongest in primordial follicle oocytes and rapidly declines as oocytes mature and move from the cortex (at protein level).

The protein resides in the nucleus inner membrane. Its subcellular location is the nucleus envelope. Together with EMD, contributes to nuclear envelope stiffness in germ cells. Required for female fertility. Essential for normal erythropoiesis. Required for efficient nuclear envelope opening and enucleation during the late stages of erythroblast maturation. This chain is Nuclear envelope integral membrane protein 1 (Nemp1), found in Mus musculus (Mouse).